A 139-amino-acid polypeptide reads, in one-letter code: Putative nickel-responsive regulator (139 aa).

The Ni(2+) site is built by histidine 79, histidine 90, histidine 92, and cysteine 98.

This sequence belongs to the transcriptional regulatory CopG/NikR family. The cofactor is Ni(2+).

Its function is as follows. Transcriptional regulator. This chain is Putative nickel-responsive regulator, found in Geotalea uraniireducens (strain Rf4) (Geobacter uraniireducens).